Consider the following 185-residue polypeptide: Adenine phosphoribosyltransferase (185 aa).

Belongs to the purine/pyrimidine phosphoribosyltransferase family. Homodimer.

Its subcellular location is the cytoplasm. The catalysed reaction is AMP + diphosphate = 5-phospho-alpha-D-ribose 1-diphosphate + adenine. It participates in purine metabolism; AMP biosynthesis via salvage pathway; AMP from adenine: step 1/1. In terms of biological role, catalyzes a salvage reaction resulting in the formation of AMP, that is energically less costly than de novo synthesis. The protein is Adenine phosphoribosyltransferase of Nocardioides sp. (strain ATCC BAA-499 / JS614).